The chain runs to 491 residues: Cobyric acid synthase (491 aa).

The GATase cobBQ-type domain occupies 253 to 429 (AHRVAVVRLP…WHGSLEGDAL (177 aa)). Residue cysteine 334 is the Nucleophile of the active site. The active site involves histidine 421.

The protein belongs to the CobB/CobQ family. CobQ subfamily.

It functions in the pathway cofactor biosynthesis; adenosylcobalamin biosynthesis. Functionally, catalyzes amidations at positions B, D, E, and G on adenosylcobyrinic A,C-diamide. NH(2) groups are provided by glutamine, and one molecule of ATP is hydrogenolyzed for each amidation. The protein is Cobyric acid synthase of Mycobacterium marinum (strain ATCC BAA-535 / M).